An 896-amino-acid chain; its full sequence is Translation initiation factor IF-2 (896 aa).

Residues 117–174 (AEAEAKAKAEAEAKAKVDAEAKVKAKAEAEAKAKAKVQTEKPAAETAEDKAAKAEEAK) show a composition bias toward basic and acidic residues. Residues 117 to 303 (AEAEAKAKAE…TRSVAPESMD (187 aa)) form a disordered region. Residues 175–195 (LLAAQDAVAKAKANEEASAAA) show a composition bias toward low complexity. A compositionally biased stretch (basic and acidic residues) spans 196 to 227 (DEARRLAEENEKRWAEEEKARKEAEKSVDHHV). Residues 254–268 (PSANAGNNANANAGA) show a composition bias toward low complexity. The region spanning 396–563 (PRAPVVTIMG…GILLEAEVLE (168 aa)) is the tr-type G domain. Residues 405–412 (GHVDHGKT) are G1. GTP is bound at residue 405–412 (GHVDHGKT). Residues 430 to 434 (GITQH) are G2. The segment at 451-454 (DTPG) is G3. GTP-binding positions include 451–455 (DTPGH) and 505–508 (NKID). The segment at 505–508 (NKID) is G4. The tract at residues 541 to 543 (SAK) is G5.

This sequence belongs to the TRAFAC class translation factor GTPase superfamily. Classic translation factor GTPase family. IF-2 subfamily.

It localises to the cytoplasm. One of the essential components for the initiation of protein synthesis. Protects formylmethionyl-tRNA from spontaneous hydrolysis and promotes its binding to the 30S ribosomal subunits. Also involved in the hydrolysis of GTP during the formation of the 70S ribosomal complex. The polypeptide is Translation initiation factor IF-2 (Shewanella pealeana (strain ATCC 700345 / ANG-SQ1)).